The following is a 111-amino-acid chain: Viscotoxin-A3 (111 aa).

The signal sequence occupies residues 1–26 (MEVVRGSSLVLLVLLLGALLVSQVES). 3 disulfide bridges follow: C29/C66, C30/C58, and C42/C52. Positions 73 to 111 (FYCTLGCESSQCATNSNGDAEAVRCKTACSDLCQDVDDA) are cleaved as a propeptide — acidic domain.

It belongs to the plant thionin (TC 1.C.44) family.

It is found in the secreted. Thionins are small plant proteins which are toxic to animal cells. They seem to exert their toxic effect at the level of the cell membrane. Their precise function is not known. This Viscum album (European mistletoe) protein is Viscotoxin-A3 (THI2.1).